A 235-amino-acid polypeptide reads, in one-letter code: tRNA (guanine-N(7)-)-methyltransferase (235 aa).

Residues glycine 60, 83–84, 116–117, and leucine 136 contribute to the S-adenosyl-L-methionine site; these read EI and NA. Aspartate 139 is a catalytic residue. 214–216 is a binding site for S-adenosyl-L-methionine; the sequence is SEE.

The protein belongs to the class I-like SAM-binding methyltransferase superfamily. TrmB family.

The protein resides in the nucleus. It carries out the reaction guanosine(46) in tRNA + S-adenosyl-L-methionine = N(7)-methylguanosine(46) in tRNA + S-adenosyl-L-homocysteine. It participates in tRNA modification; N(7)-methylguanine-tRNA biosynthesis. In terms of biological role, catalyzes the formation of N(7)-methylguanine at position 46 (m7G46) in tRNA. The polypeptide is tRNA (guanine-N(7)-)-methyltransferase (Anopheles gambiae (African malaria mosquito)).